A 128-amino-acid chain; its full sequence is Large ribosomal subunit protein uL22 (128 aa).

Belongs to the universal ribosomal protein uL22 family. As to quaternary structure, part of the 50S ribosomal subunit.

This protein binds specifically to 23S rRNA; its binding is stimulated by other ribosomal proteins, e.g. L4, L17, and L20. It is important during the early stages of 50S assembly. It makes multiple contacts with different domains of the 23S rRNA in the assembled 50S subunit and ribosome. Functionally, the globular domain of the protein is located near the polypeptide exit tunnel on the outside of the subunit, while an extended beta-hairpin is found that lines the wall of the exit tunnel in the center of the 70S ribosome. The sequence is that of Large ribosomal subunit protein uL22 from Rhodopseudomonas palustris (strain HaA2).